A 250-amino-acid polypeptide reads, in one-letter code: Carboxy-S-adenosyl-L-methionine synthase (250 aa).

S-adenosyl-L-methionine-binding positions include Tyr45, Gly70–Ser72, Asp95–Asn96, Asp123–Ile124, Asn138, and Arg205.

The protein belongs to the class I-like SAM-binding methyltransferase superfamily. Cx-SAM synthase family. Homodimer.

It carries out the reaction prephenate + S-adenosyl-L-methionine = carboxy-S-adenosyl-L-methionine + 3-phenylpyruvate + H2O. In terms of biological role, catalyzes the conversion of S-adenosyl-L-methionine (SAM) to carboxy-S-adenosyl-L-methionine (Cx-SAM). The polypeptide is Carboxy-S-adenosyl-L-methionine synthase (Marinobacter nauticus (strain ATCC 700491 / DSM 11845 / VT8) (Marinobacter aquaeolei)).